Here is a 986-residue protein sequence, read N- to C-terminus: Vacuolar membrane protease (986 aa).

Over 1-20 (MATPRAQKFNPIAFTPGPVT) the chain is Cytoplasmic. Residues 21–41 (LITTIVYLALLIPILVISLVV) form a helical membrane-spanning segment. Residues 42 to 392 (PPAPETSPEG…AFAVFRLHTL (351 aa)) lie on the Vacuolar side of the membrane. Residues asparagine 53, asparagine 116, and asparagine 119 are each glycosylated (N-linked (GlcNAc...) asparagine). Residues histidine 175 and aspartate 187 each contribute to the Zn(2+) site. The active-site Proton acceptor is glutamate 221. A Zn(2+)-binding site is contributed by glutamate 222. Asparagine 238 carries N-linked (GlcNAc...) asparagine glycosylation. Residues glutamate 247 and histidine 320 each coordinate Zn(2+). Residues 393–413 (FALSVTLLIVAPLVIFITAIV) form a helical membrane-spanning segment. The Cytoplasmic segment spans residues 414 to 447 (LSKTDRMYLFSMSKSLGGTDERVSLRGLRGLFRT). Residues 448–468 (PIILAVATVIPIGLAYLLEKV) traverse the membrane as a helical segment. At 469 to 477 (NPYIVHSSQ) the chain is on the vacuolar side. A helical transmembrane segment spans residues 478–498 (FSVWSMMISVWIFLAWFLACA). The Cytoplasmic segment spans residues 499 to 509 (ADFFRPSALHR). A helical transmembrane segment spans residues 510 to 530 (AYSYTWIFIATWVMLVINTVY). Residues 531-534 (ANQK) are Vacuolar-facing. Residues 535–555 (GIAAGYFVFFYFSGSFLATWV) traverse the membrane as a helical segment. Residues 556–665 (SYLELFALPR…WSWTLPRWTW (110 aa)) lie on the Cytoplasmic side of the membrane. Positions 595 to 620 (ELPSDTGPHAEYPGDADETDPTESTS) are disordered. A helical membrane pass occupies residues 666 to 686 (VLQLLLLAPIVLILVGQLALF). Topologically, residues 687-702 (LTTSMSQVGSDGVSTF) are vacuolar. The helical transmembrane segment at 703–723 (IVYLACAVFTTLLFAPLFPFI) threads the bilayer. Residues 724–729 (HRFTYH) are Cytoplasmic-facing. Residues 730–750 (IPTFLFLVFVGTLIYNLVAFP) traverse the membrane as a helical segment. Residues 751 to 986 (FSPANRLKMF…VEASHGITIQ (236 aa)) are Vacuolar-facing. 3 N-linked (GlcNAc...) asparagine glycosylation sites follow: asparagine 797, asparagine 840, and asparagine 948.

Belongs to the peptidase M28 family. Zn(2+) is required as a cofactor.

Its subcellular location is the vacuole membrane. Functionally, may be involved in vacuolar sorting and osmoregulation. This chain is Vacuolar membrane protease, found in Blastomyces gilchristii (strain SLH14081) (Blastomyces dermatitidis).